A 436-amino-acid polypeptide reads, in one-letter code: Putative F-box/FBD/LRR-repeat protein At5g44960 (436 aa).

The region spanning 4–50 (CDYINELPDSLLTQILLDLRTKDSVKTSVSSKRWRNLWLNVPGLDLF) is the F-box domain. 2 LRR repeats span residues 287-310 (ISSV…SKLG) and 397-420 (SAVL…SYKK). The region spanning 355-407 (EENIDFHEVPQCLISTLEYVHINKLMMMEQSGIKLVNYFIENSAVLKKLTLRF) is the FBD domain.

This Arabidopsis thaliana (Mouse-ear cress) protein is Putative F-box/FBD/LRR-repeat protein At5g44960.